The primary structure comprises 454 residues: NADP-specific glutamate dehydrogenase 1 (454 aa).

Lys110 is a catalytic residue. Gly174–Ala203 lines the NAD(+) pocket.

The protein belongs to the Glu/Leu/Phe/Val dehydrogenases family. In terms of assembly, homohexamer.

It catalyses the reaction L-glutamate + NADP(+) + H2O = 2-oxoglutarate + NH4(+) + NADPH + H(+). The sequence is that of NADP-specific glutamate dehydrogenase 1 (GDH1) from Saccharomyces uvarum (strain ATCC 76518 / CBS 7001 / CLIB 283 / NBRC 10550 / MCYC 623 / NCYC 2669 / NRRL Y-11845) (Yeast).